Consider the following 239-residue polypeptide: MRVLKFLSLMAMLGCTIGQSGSATPGSLHLLGGPTTTDWYPECALRCWENTKYVTKCSEDQQCLCSDVNYQNSVFQCIYSQCDTVHFGSALHHAIAQCLGTDNEVFFAIPPIPDRDALRRREDEYAAGAKLFGSGSAAGYPTESAAFPVQSANYPTDSVGGPYSPSPTASVPFPYFSLTSVTSPAAKSATTTEATRNTVPASTTAPSPSPQLYTGNASTSRATVSLTVVLTVAAVYLVL.

The N-terminal stretch at 1 to 18 (MRVLKFLSLMAMLGCTIG) is a signal peptide. The region spanning 19–125 (QSGSATPGSL…DALRRREDEY (107 aa)) is the CFEM domain. Cystine bridges form between Cys-43–Cys-82, Cys-47–Cys-77, Cys-57–Cys-63, and Cys-65–Cys-98. A heme-binding site is contributed by Asp-60. The segment covering 187–199 (KSATTTEATRNTV) has biased composition (polar residues). The tract at residues 187–216 (KSATTTEATRNTVPASTTAPSPSPQLYTGN) is disordered. A lipid anchor (GPI-anchor amidated glycine) is attached at Gly-215. A glycan (N-linked (GlcNAc...) asparagine) is linked at Asn-216. Residues 216-239 (NASTSRATVSLTVVLTVAAVYLVL) constitute a propeptide, removed in mature form.

The protein belongs to the RBT5 family.

The protein resides in the cell membrane. It localises to the secreted. The protein localises to the host nucleus. It is found in the host cell membrane. In terms of biological role, appears to function during host infection, and may play a role in suppressing the host immune response. The chain is Secreted effector CFEM9 from Marssonina brunnea f. sp. multigermtubi (strain MB_m1) (Marssonina leaf spot fungus).